The primary structure comprises 468 residues: ATP synthase subunit beta 2 (468 aa).

145-152 is a binding site for ATP; that stretch reads GGAGVGKT.

The protein belongs to the ATPase alpha/beta chains family. In terms of assembly, F-type ATPases have 2 components, CF(1) - the catalytic core - and CF(0) - the membrane proton channel. CF(1) has five subunits: alpha(3), beta(3), gamma(1), delta(1), epsilon(1). CF(0) has three main subunits: a(1), b(2) and c(9-12). The alpha and beta chains form an alternating ring which encloses part of the gamma chain. CF(1) is attached to CF(0) by a central stalk formed by the gamma and epsilon chains, while a peripheral stalk is formed by the delta and b chains.

It localises to the cell membrane. It catalyses the reaction ATP + H2O + 4 H(+)(in) = ADP + phosphate + 5 H(+)(out). Produces ATP from ADP in the presence of a proton gradient across the membrane. The catalytic sites are hosted primarily by the beta subunits. This Mycoplasmopsis pulmonis (strain UAB CTIP) (Mycoplasma pulmonis) protein is ATP synthase subunit beta 2.